The following is a 526-amino-acid chain: Butyrophilin subfamily 1 member A1 (526 aa).

Residues 1-26 (MAVFPNSCLAGCLLIFILLQLPKLDS) form the signal peptide. 2 Ig-like V-type domains span residues 27–140 (APFD…VHLK) and 148–234 (PHIS…VEVS). At 27-242 (APFDVIGPQE…VSIPASFFPR (216 aa)) the chain is on the extracellular side. Disulfide bonds link C50–C124 and C164–C218. N55 is a glycosylation site (N-linked (GlcNAc...) (complex) asparagine). N-linked (GlcNAc...) (hybrid) asparagine glycosylation is present at N215. The helical transmembrane segment at 243–269 (LTPWMVAVAVILVVLGLLTIGSIFFTW) threads the bilayer. At 270–526 (RLYKERSRQR…IPLQPSQGVP (257 aa)) the chain is on the cytoplasmic side. The 195-residue stretch at 285–479 (SKEKLLEELK…LTICPVTDGL (195 aa)) folds into the B30.2/SPRY domain.

Belongs to the immunoglobulin superfamily. BTN/MOG family. In terms of assembly, seems to associate with xanthine dehydrogenase/oxidase. Expressed in mammary tissue.

It is found in the membrane. In terms of biological role, may function in the secretion of milk-fat droplets. May act as a specific membrane-associated receptor for the association of cytoplasmic droplets with the apical plasma membrane. Inhibits the proliferation of CD4 and CD8 T-cells activated by anti-CD3 antibodies, T-cell metabolism and IL2 and IFNG secretion. This Bos taurus (Bovine) protein is Butyrophilin subfamily 1 member A1 (BTN1A1).